We begin with the raw amino-acid sequence, 168 residues long: Oleosin 18.2 kDa (168 aa).

Position 2 is an N-acetylalanine (alanine 2). The interval 2–45 (AEVRDRNLPHQVQVHPQYRLDNTTGGGYGAKNYHSGPSTSQVLA) is polar. Transmembrane regions (helical) follow at residues 43–63 (VLAV…AGLT), 76–96 (PLFI…AMAV), and 97–117 (TGFL…SYVL). The interval 46–117 (VLTLLPIGGT…TGLSSLSYVL (72 aa)) is hydrophobic.

It belongs to the oleosin family.

The protein localises to the lipid droplet. It localises to the membrane. Functionally, may have a structural role to stabilize the lipid body during desiccation of the seed by preventing coalescence of the oil. Probably interacts with both lipid and phospholipid moieties of lipid bodies. May also provide recognition signals for specific lipase anchorage in lipolysis during seedling growth. This chain is Oleosin 18.2 kDa (MATP6-A), found in Gossypium hirsutum (Upland cotton).